The following is a 1790-amino-acid chain: MTTNHLENKVHAATESLFYFSNEFPKRDLQDLFRQAHTRSKLAQHKCLAQFIQDATQTVKQEIQGLSMKLQHLFKPLESVLTWAEDHELREGALSGAIDGVLLIVAQMTTLIGYLENNTAKMDDIATASLAGLGVGLLTACAVSSASTIADLSATGADAVRTAFRLGVHVYYVSQTLEALDPSARPETWAYVINNVTPTEAQEQLDTLYANSTQPATSKVFISALSRSSVTVSGPPARLKALVTGSEFFRTSRYIALPVYGGLCHAPHVYGQDDVDMVMQSRAFSVQKAPATHLKSVWSTSSGYPYLVEDSKSLFASVVAELLTKAICWDSVVSSIVKYTGLTDASEMIIYNYGNSIPLNELESALKSSPAKLKVVNSNLLSWMGHNSPTSVKPRNTLQSKLAIVGMSCRLPGGATSNELFWDVLRRGVDTSQVIPADRFDVATHYDPAGKQLNKSMTQYGCFIDEPGLFDAPFFNMSPREAQTVDPQMRLALVTAYEALEQAGYVANRTASTRLERIGTYYGQAADDYREVNQGQEVSTYYIPGGCRAFGPGRINYFFKFAGPSYSIDTACSSGLAAVEVACQALWRGDVDTAVTGGVNILTNPDGFTGLCSGHFLSKGHNACKTWDATADGYCRADGVGSLVIKRLEDAEDDNDNILGVILGAGTNHSAQAVSITHPHAGHQAYLARQVLRQAGVDPLDVSYVELHGTGTQAGDSEEMQGILDVYAPLSKRRSQSQPLHIGAVKANMGHSESSAGTTALVKVLLMLQNNVIPPHIGITTEMNPKFGHDFKKRNLHIPFELTPWEHTDDKRRIAVVNNFGAAGGNTTMILEDAPMRSISQSDTRKTHVVVLSAKTKTSLVANVDRLISYIDSHPDTQIANVSYTTTARRYQHVLRVAISTSEIAHLQKQLYSHREKIEYIQPVRKAEPPPVAFSFTGQGASHKSMNLELYRDVPTFREFVHQLDSLTRAQGFESFICALDGSHDKDHQHSPVVTQLALVCSEIALAKYWASIGVLPNIVIGHSLGEYAAMHIAGVISASDAIFLVGRRAQLLQERCKIGSHLMMAVRASVDQITQSAAGKPFTVACVNGPADTVLAGTKEEIEVIKTPLESSGLQCIKLDVAFAFHSEQTDPLLDDFEALAKSGVIFAEPKLPVISPLLGKVIFDAKTINATYVRRATREAVDFLAALNNAQEIGAIGGDTVWVEIGPHPVCTGFVRSTIPSVKLALPSFRRGEENWKTLSDSIAQLYTVGVDIDWTELHRPFEKNLRLLDLPTYAFNEKTYWLQYKGDWCLTKGNTFYADEQKIVRGQLPSVSELHTSTVQQIVEQVFDTDTGSCTVVIESDMMQPDFLAAAHGHRMNDCGVATSSIHGDIAFTLAEHIHKKLGVHGKDTRYNVANLQVTKALVARKNTANPQVIRVTASTTDVRSGIDLVWQNINANGDSAEPFATSSIHAGISTDWISSWSSLTHLVRDRIETLDRLVAEGKANRLSHNMAYTLFASNLVDYADKYRGMQSVVMHGLEGCADVELSTKESGVWTVPPYFIDSVAHLAGFIMNCSDAIDAKKFFCITPGWKTMRFARPLVPGARYQSYVKMIPTVEDDTAYFGDVYILQDGVIIGLVEGIEFHRYRRILLERLFSAPDSTNLDDTTETKDISSSTQHSVPVSRQVPPAAKSSAQTVFESSLPFAVPGPRKSTARPAVDEIAAREKPVASQSSSITNRAMQLIADEVGVELADLCDDVGFSDLGVDSLMSLVIADTFRATLDIKVNGSLFLDYETIGDLRNWLEETYA.

The N-terminal acylcarrier protein transacylase domain (SAT) stretch occupies residues R27–H265. Residues Q399–D833 enclose the Ketosynthase family 3 (KS3) domain. Residues C572, H708, and H751 each act as for beta-ketoacyl synthase activity in the active site. Residues F934–D1254 form a malonyl-CoA:ACP transacylase (MAT) domain region. The tract at residues Q1323–I1475 is N-terminal hotdog fold. The PKS/mFAS DH domain maps to Q1323–E1634. The Proton acceptor; for dehydratase activity role is filled by H1357. The segment at H1357 to I1631 is product template (PT) domain. The C-terminal hotdog fold stretch occupies residues A1487 to E1634. The active-site Proton donor; for dehydratase activity is the D1545. The tract at residues N1644–Q1667 is disordered. The span at I1654–V1664 shows a compositional bias: polar residues. One can recognise a Carrier domain in the interval S1715–Y1789. S1749 carries the O-(pantetheine 4'-phosphoryl)serine modification.

The enzyme catalyses holo-[ACP] + 8 malonyl-CoA + 8 H(+) = atrochrysone carboxyl-[ACP] + 8 CO2 + 8 CoA + 2 H2O. It participates in pigment biosynthesis. Functionally, non-reducing polyketide synthase; part of the gene cluster that mediates the biosynthesis of the bianthraquinone cladofulvin, a conidial pigment not required for virulence but that plays a role in fitness and resistance to environmental stresses including UV light and low-temperature stress. The pathway begins with the synthesis of atrochrysone thioester by the polyketide synthase (PKS) claG. The atrochrysone carboxyl ACP thioesterase claF then breaks the thioester bond and releases the atrochrysone carboxylic acid from claG. This compound is decarboxylated by claH to yield emodin, which is further converted to chrysophanol hydroquinone by the reductase claC and the dehydratase claB. The cytochrome P450 monooxygenase claM then catalyzes the dimerization of nataloe-emodin to cladofulvin. The chain is Atrochrysone carboxylic acid synthase from Passalora fulva (Tomato leaf mold).